Here is a 255-residue protein sequence, read N- to C-terminus: Acetylglutamate kinase (255 aa).

Substrate is bound by residues 40–41 (GG), Arg62, and Asn153.

The protein belongs to the acetylglutamate kinase family. ArgB subfamily.

It localises to the cytoplasm. The enzyme catalyses N-acetyl-L-glutamate + ATP = N-acetyl-L-glutamyl 5-phosphate + ADP. The protein operates within amino-acid biosynthesis; L-arginine biosynthesis; N(2)-acetyl-L-ornithine from L-glutamate: step 2/4. In terms of biological role, catalyzes the ATP-dependent phosphorylation of N-acetyl-L-glutamate. This is Acetylglutamate kinase from Bacillus cereus (strain AH820).